The chain runs to 878 residues: von Willebrand factor A domain-containing protein DDB_G0267758 (878 aa).

One can recognise a VIT domain in the interval 36-169 (GLFLTENNKK…TVKITLTITS (134 aa)). The VWFA domain maps to 316–496 (EFIFLIDCSG…ISLKPMFSNI (181 aa)). A compositionally biased stretch (low complexity) spans 595 to 623 (SSSSSSSSSSSSSSSSSSSSSSSSSSSSS). Disordered stretches follow at residues 595 to 638 (SSSS…HRLS) and 752 to 774 (SVKKSKKSETKEETTKTTSSKTK). Polar residues predominate over residues 624-635 (TTTATTNQNQIH).

This Dictyostelium discoideum (Social amoeba) protein is von Willebrand factor A domain-containing protein DDB_G0267758.